Reading from the N-terminus, the 166-residue chain is Large ribosomal subunit protein uL10 (166 aa).

The protein belongs to the universal ribosomal protein uL10 family. As to quaternary structure, part of the ribosomal stalk of the 50S ribosomal subunit. The N-terminus interacts with L11 and the large rRNA to form the base of the stalk. The C-terminus forms an elongated spine to which L12 dimers bind in a sequential fashion forming a multimeric L10(L12)X complex.

Its function is as follows. Forms part of the ribosomal stalk, playing a central role in the interaction of the ribosome with GTP-bound translation factors. The chain is Large ribosomal subunit protein uL10 from Pseudomonas putida (strain GB-1).